Consider the following 262-residue polypeptide: Large ribosomal subunit protein bL9m (262 aa).

Residues 1–49 (MAASMAPRCSSLLWAGAAWLRQRGIGELLQPRIERSTPGRDFSLSHYQS) constitute a mitochondrion transit peptide.

The protein belongs to the bacterial ribosomal protein bL9 family. Component of the mitochondrial ribosome large subunit (39S) which comprises a 16S rRNA and about 50 distinct proteins.

Its subcellular location is the mitochondrion. The polypeptide is Large ribosomal subunit protein bL9m (Mrpl9) (Rattus norvegicus (Rat)).